Reading from the N-terminus, the 218-residue chain is Small ribosomal subunit protein uS7m (218 aa).

A mitochondrion-targeting transit peptide spans 1-19 (MSLLGRIAEKTSRLSCLRL).

It belongs to the universal ribosomal protein uS7 family. As to quaternary structure, component of the mitochondrial ribosome small subunit (28S) which comprises a 12S rRNA and about 30 distinct proteins.

It is found in the mitochondrion. This is Small ribosomal subunit protein uS7m (mRpS7) from Drosophila melanogaster (Fruit fly).